Reading from the N-terminus, the 260-residue chain is MTPPTTGLPAENTTDDNDHLVQSDDPEHPANLIPSLCAKFWTLGWVTGTGGGASIRDDDLVYLAPSGVQKELMKPSDIYVLSLAAQAQSLSRRQRVYLRSPPVYKPSQCTPLFLAAFTKRNAGCCIHTHSHWAVLVTLILEQQGSKEFRINNIEQIKGFGKGFQKSGNLGYHDTLVIPVIENTAHEEDLTEFLEEAMDKYPDTYAVLVRRHGVYVWGDNVHKAKTQCESLDYLFQLAVEMKQLGLPWITDIEPTIPTRKD.

Positions 1–26 are disordered; it reads MTPPTTGLPAENTTDDNDHLVQSDDP. Over residues 16-26 the composition is skewed to basic and acidic residues; the sequence is DNDHLVQSDDP. Cys109 lines the substrate pocket. 2 residues coordinate Zn(2+): His127 and His129. Residue Glu154 is the Proton donor/acceptor of the active site. His211 contributes to the Zn(2+) binding site.

The protein belongs to the aldolase class II family. MtnB subfamily. Zn(2+) is required as a cofactor.

It is found in the cytoplasm. The enzyme catalyses 5-(methylsulfanyl)-D-ribulose 1-phosphate = 5-methylsulfanyl-2,3-dioxopentyl phosphate + H2O. It participates in amino-acid biosynthesis; L-methionine biosynthesis via salvage pathway; L-methionine from S-methyl-5-thio-alpha-D-ribose 1-phosphate: step 2/6. Catalyzes the dehydration of methylthioribulose-1-phosphate (MTRu-1-P) into 2,3-diketo-5-methylthiopentyl-1-phosphate (DK-MTP-1-P). This chain is Methylthioribulose-1-phosphate dehydratase, found in Podospora anserina (strain S / ATCC MYA-4624 / DSM 980 / FGSC 10383) (Pleurage anserina).